The primary structure comprises 124 residues: uncharacterized protein (124 aa).

The tract at residues 1 to 28 (MGTSLRSQSFREPRPSYGRLHESQGRSL) is disordered. Positions 9–28 (SFREPRPSYGRLHESQGRSL) are enriched in basic and acidic residues.

This is an uncharacterized protein from Mus musculus (Mouse).